A 1274-amino-acid chain; its full sequence is Regulator of telomere elongation helicase 1 (1274 aa).

Positions 7-296 constitute a Helicase ATP-binding domain; the sequence is NGVTVDFPFQ…ARVAQHGELQ (290 aa). Residue 42–49 participates in ATP binding; that stretch reads SPTGTGKT. Residues Cys-145, Cys-163, Cys-172, and Cys-207 each contribute to the [4Fe-4S] cluster site. Positions 151–167 match the Nuclear localization signal motif; the sequence is KKQESNHMQISLCRKKV. A DEAH box motif is present at residues 250–253; it reads DEAH. A Nuclear localization signal motif is present at residues 871–877; the sequence is QRGGKKK. Disordered regions lie at residues 982-1002, 1014-1038, and 1143-1198; these read NSLP…RREL, RQLD…SKGD, and ELPC…DDTI. Positions 1186 to 1196 are enriched in basic and acidic residues; that stretch reads QRPDQSARSDD.

It belongs to the helicase family. RAD3/XPD subfamily. As to quaternary structure, interacts with TERF1. Interacts (via PIP-box) with PCNA; the interaction is direct and essential for suppressing telomere fragility. Interacts with MMS19; the interaction mediates the association of RTEL1 with the cytosolic iron-sulfur protein assembly (CIA) complex.

The protein localises to the nucleus. It carries out the reaction ATP + H2O = ADP + phosphate + H(+). Functionally, a probable ATP-dependent DNA helicase implicated in telomere-length regulation, DNA repair and the maintenance of genomic stability. Acts as an anti-recombinase to counteract toxic recombination and limit crossover during meiosis. Regulates meiotic recombination and crossover homeostasis by physically dissociating strand invasion events and thereby promotes noncrossover repair by meiotic synthesis dependent strand annealing (SDSA) as well as disassembly of D loop recombination intermediates. Also disassembles T loops and prevents telomere fragility by counteracting telomeric G4-DNA structures, which together ensure the dynamics and stability of the telomere. The polypeptide is Regulator of telomere elongation helicase 1 (Rtel1) (Rattus norvegicus (Rat)).